Consider the following 246-residue polypeptide: Peroxisomal membrane protein 11A (246 aa).

Residues 1–93 are Cytoplasmic-facing; the sequence is MDAFIRVANQ…LCLTLANLNR (93 aa). The chain crosses the membrane as a helical span at residues 94–114; sequence VVYYICDTVLWAKSVGLTSGV. The Lumenal segment spans residues 115 to 217; sequence NREKWQRWAA…LNQLGIYKSN (103 aa). The chain crosses the membrane as a helical span at residues 218 to 238; sequence LGVVGLGGLISSLAGLLTVVY. The segment at 218–238 is required for homodimerization, interaction with PEX11G, and peroxisomal localization; sequence LGVVGLGGLISSLAGLLTVVY. Topologically, residues 239-246 are cytoplasmic; sequence PQLKLKAR.

It belongs to the peroxin-11 family. In terms of assembly, homodimer. Heterodimer with PEX11G. Probably interacts with COPB2 and COPA. Interacts with PEX19. Interacts with FIS1. As to expression, strongly expressed in liver and at lower levels in heart, brain, kidney and testis.

It is found in the peroxisome membrane. In terms of biological role, may be involved in peroxisomal proliferation and may regulate peroxisomes division. May mediate binding of coatomer proteins to the peroxisomal membrane. Promotes membrane protrusion and elongation on the peroxisomal surface. This is Peroxisomal membrane protein 11A (Pex11a) from Mus musculus (Mouse).